We begin with the raw amino-acid sequence, 247 residues long: 14-3-3-like protein B (247 aa).

This sequence belongs to the 14-3-3 family.

The polypeptide is 14-3-3-like protein B (GF14B) (Glycine max (Soybean)).